A 417-amino-acid polypeptide reads, in one-letter code: Serine hydroxymethyltransferase (417 aa).

(6S)-5,6,7,8-tetrahydrofolate is bound by residues leucine 121 and 125 to 127 (GHL). An N6-(pyridoxal phosphate)lysine modification is found at lysine 229. 355–357 (SPF) serves as a coordination point for (6S)-5,6,7,8-tetrahydrofolate.

It belongs to the SHMT family. In terms of assembly, homodimer. Requires pyridoxal 5'-phosphate as cofactor.

It is found in the cytoplasm. The catalysed reaction is (6R)-5,10-methylene-5,6,7,8-tetrahydrofolate + glycine + H2O = (6S)-5,6,7,8-tetrahydrofolate + L-serine. Its pathway is one-carbon metabolism; tetrahydrofolate interconversion. The protein operates within amino-acid biosynthesis; glycine biosynthesis; glycine from L-serine: step 1/1. In terms of biological role, catalyzes the reversible interconversion of serine and glycine with tetrahydrofolate (THF) serving as the one-carbon carrier. This reaction serves as the major source of one-carbon groups required for the biosynthesis of purines, thymidylate, methionine, and other important biomolecules. Also exhibits THF-independent aldolase activity toward beta-hydroxyamino acids, producing glycine and aldehydes, via a retro-aldol mechanism. The protein is Serine hydroxymethyltransferase of Salmonella choleraesuis (strain SC-B67).